The primary structure comprises 173 residues: Alpha-crystallin A chain (173 aa).

N-acetylmethionine is present on Met1. The interval 1-63 (MDIAIQHPWF…RSVLDSGISE (63 aa)) is required for complex formation with BFSP1 and BFSP2. A Deamidated glutamine; partial modification is found at Gln6. At Ser45 the chain carries Phosphoserine. Gln50 carries the post-translational modification Deamidated glutamine; partial. The sHSP domain maps to 52-162 (LFRSVLDSGI…GHSERAIPVS (111 aa)). Lys70 is subject to N6-acetyllysine. Position 90 is a deamidated glutamine; partial (Gln90). Residue Lys99 is modified to N6-acetyllysine. His100 serves as a coordination point for Zn(2+). Residue Asn101 is modified to Deamidated asparagine; partial. Zn(2+)-binding residues include Glu102 and His107. Ser122 is modified (phosphoserine). Deamidated asparagine; partial is present on Asn123. The segment at 144–173 (PKVTSGMDAGHSERAIPVSREEKPSSAPSS) is disordered. A compositionally biased stretch (basic and acidic residues) spans 153–167 (GHSERAIPVSREEKP). Zn(2+) is bound at residue His154. The O-linked (GlcNAc) serine glycan is linked to Ser162.

The protein belongs to the small heat shock protein (HSP20) family. In terms of assembly, heteromer composed of three CRYAA and one CRYAB subunits. Inter-subunit bridging via zinc ions enhances stability, which is crucial as there is no protein turn over in the lens. Can also form homodimers and homotetramers (dimers of dimers) which serve as the building blocks of homooligomers. Within homooligomers, the zinc-binding motif is created from residues of 3 different molecules. His-100 and Glu-102 from one molecule are ligands of the zinc ion, and His-107 and His-154 residues from additional molecules complete the site with tetrahedral coordination geometry. Part of a complex required for lens intermediate filament formation composed of BFSP1, BFSP2 and CRYAA. Post-translationally, acetylation at Lys-70 may increase chaperone activity. In terms of processing, undergoes age-dependent proteolytical cleavage at the C-terminus.

The protein localises to the cytoplasm. Its subcellular location is the nucleus. Contributes to the transparency and refractive index of the lens. Acts as a chaperone, preventing aggregation of various proteins under a wide range of stress conditions. Required for the correct formation of lens intermediate filaments as part of a complex composed of BFSP1, BFSP2 and CRYAA. The polypeptide is Alpha-crystallin A chain (CRYAA) (Phocoena phocoena (Harbor porpoise)).